A 168-amino-acid polypeptide reads, in one-letter code: Translationally-controlled tumor protein homolog (168 aa).

The 168-residue stretch at 1-168 (MLVYQDLVSG…IAPGLKEVKC (168 aa)) folds into the TCTP domain.

It belongs to the TCTP family.

It localises to the cytoplasm. Functionally, involved in calcium binding and microtubule stabilization. The chain is Translationally-controlled tumor protein homolog (TCTP) from Cucumis melo (Muskmelon).